The sequence spans 103 residues: Sec-independent protein translocase protein TatA (103 aa).

The helical transmembrane segment at 1–21 (MGNIFSPTHLIVILLIVLVLF) threads the bilayer. The interval 60–103 (YSKTTDVRPQQSQPLSVKRAAERRKGSSSFKEGKASVAKKQRGK) is disordered.

Belongs to the TatA/E family. The Tat system comprises two distinct complexes: a TatABC complex, containing multiple copies of TatA, TatB and TatC subunits, and a separate TatA complex, containing only TatA subunits. Substrates initially bind to the TatABC complex, which probably triggers association of the separate TatA complex to form the active translocon.

It localises to the cell inner membrane. Functionally, part of the twin-arginine translocation (Tat) system that transports large folded proteins containing a characteristic twin-arginine motif in their signal peptide across membranes. TatA could form the protein-conducting channel of the Tat system. This is Sec-independent protein translocase protein TatA from Bartonella quintana (strain Toulouse) (Rochalimaea quintana).